Here is a 559-residue protein sequence, read N- to C-terminus: Potassium-transporting ATPase potassium-binding subunit (559 aa).

13 helical membrane passes run glycine 5–serine 25, leucine 27–tryptophan 47, leucine 63–tryptophan 83, glycine 132–isoleucine 152, leucine 170–isoleucine 190, leucine 253–alanine 273, leucine 283–valine 303, phenylalanine 327–valine 347, alanine 356–valine 376, glycine 379–glycine 399, methionine 416–methionine 436, leucine 484–alanine 504, and glycine 524–isoleucine 544.

It belongs to the KdpA family. The system is composed of three essential subunits: KdpA, KdpB and KdpC.

The protein localises to the cell inner membrane. Part of the high-affinity ATP-driven potassium transport (or Kdp) system, which catalyzes the hydrolysis of ATP coupled with the electrogenic transport of potassium into the cytoplasm. This subunit binds the periplasmic potassium ions and delivers the ions to the membrane domain of KdpB through an intramembrane tunnel. This Salmonella heidelberg (strain SL476) protein is Potassium-transporting ATPase potassium-binding subunit.